A 460-amino-acid polypeptide reads, in one-letter code: Argininosuccinate lyase (460 aa).

This sequence belongs to the lyase 1 family. Argininosuccinate lyase subfamily.

The protein resides in the cytoplasm. The enzyme catalyses 2-(N(omega)-L-arginino)succinate = fumarate + L-arginine. Its pathway is amino-acid biosynthesis; L-arginine biosynthesis; L-arginine from L-ornithine and carbamoyl phosphate: step 3/3. The chain is Argininosuccinate lyase from Prosthecochloris aestuarii (strain DSM 271 / SK 413).